Reading from the N-terminus, the 476-residue chain is uncharacterized protein (476 aa).

Positions 1–24 (MIRKSATGVIVALAVIWGGGTWYT) are cleaved as a signal peptide.

To E.coli YdgA and H.influenzae HI_1236.

This is an uncharacterized protein from Escherichia coli (strain K12).